A 158-amino-acid polypeptide reads, in one-letter code: NADH-quinone oxidoreductase subunit B (158 aa).

[4Fe-4S] cluster is bound by residues Cys37, Cys38, Cys102, and Cys132.

The protein belongs to the complex I 20 kDa subunit family. As to quaternary structure, NDH-1 is composed of 14 different subunits. Subunits NuoB, C, D, E, F, and G constitute the peripheral sector of the complex. Requires [4Fe-4S] cluster as cofactor.

The protein localises to the cell inner membrane. It catalyses the reaction a quinone + NADH + 5 H(+)(in) = a quinol + NAD(+) + 4 H(+)(out). In terms of biological role, NDH-1 shuttles electrons from NADH, via FMN and iron-sulfur (Fe-S) centers, to quinones in the respiratory chain. Couples the redox reaction to proton translocation (for every two electrons transferred, four hydrogen ions are translocated across the cytoplasmic membrane), and thus conserves the redox energy in a proton gradient. This Aromatoleum aromaticum (strain DSM 19018 / LMG 30748 / EbN1) (Azoarcus sp. (strain EbN1)) protein is NADH-quinone oxidoreductase subunit B.